The following is a 56-amino-acid chain: UPF0391 membrane protein Bd1438 (56 aa).

The next 2 helical transmembrane spans lie at 4 to 24 (AAIAFFIIAIVAYIFGASGVA) and 33 to 53 (ILLFVFLALAIISFVINLVSG).

It belongs to the UPF0391 family.

It localises to the cell membrane. The protein is UPF0391 membrane protein Bd1438 of Bdellovibrio bacteriovorus (strain ATCC 15356 / DSM 50701 / NCIMB 9529 / HD100).